A 384-amino-acid polypeptide reads, in one-letter code: Adaptive-response sensory kinase SasA (384 aa).

Positions 162-384 constitute a Histidine kinase domain; sequence MLAHDLRSPL…SFHFTLPVYR (223 aa). Phosphohistidine; by autocatalysis is present on His165.

As to quaternary structure, homooligomerizes. Interacts with KaiC. Participates in the KaiABC clock complex, whose core is composed of a KaiC homohexamer, 6 KaiB and up to 6 KaiA dimers. SasA and KaiB(fs) compete to bind to KaiC.

The enzyme catalyses ATP + protein L-histidine = ADP + protein N-phospho-L-histidine.. Its function is as follows. Member of the two-component regulatory system SasA/RpaA involved in genome-wide circadian gene expression. One of several clock output pathways. Participates in the Kai clock protein complex, the main circadian regulator in cyanobacteria, via its interaction with KaiC. KaiC enhances the autophosphorylation activity of SasA, which then transfers its phosphate group to RpaA to activate it. In addition to its output function, recruits fold-shifted KaiB (KaiB(fs)) to KaiC to cooperatively form the KaiB(6):KaiC(6) complex (independent of SasA kinase activity). Required for robustness of the circadian rhythm of gene expression and is involved in clock output, also required for adaptation to light/dark cycles. In Microcystis aeruginosa (strain NIES-843 / IAM M-2473), this protein is Adaptive-response sensory kinase SasA.